A 109-amino-acid chain; its full sequence is YNINVIVMVCREIELGKKKCERYWADRGDSKRFGDITVTLSKKEDLKDGYCLRTIKAEKGNEIRYIKQFHYTSWPDHGVPKTCLEILSLINHVRDVQSYSEDETTPLCV.

In terms of domain architecture, Tyrosine-protein phosphatase spans 1 to 109; sequence YNINVIVMVC…SEDETTPLCV (109 aa). Aspartate 76 contributes to the substrate binding site.

Belongs to the protein-tyrosine phosphatase family.

It carries out the reaction O-phospho-L-tyrosyl-[protein] + H2O = L-tyrosyl-[protein] + phosphate. This chain is Tyrosine-protein phosphatase 6 (STY-6), found in Styela plicata (Wrinkled sea squirt).